The following is a 468-amino-acid chain: uncharacterized protein (468 aa).

The disordered stretch occupies residues 1-22 (MVKRSSHRQVVLDEDDEENYNN). An RING-type zinc finger spans residues 85–123 (CPICTEALQRPFTTHCGHTYCYECLLNWLKESKSCPTCR). Over residues 386–402 (DSLNSSSNNSPSHNNIH) the composition is skewed to low complexity. The interval 386–468 (DSLNSSSNNS…TIQLDSDEES (83 aa)) is disordered. The segment covering 417-434 (IVTNGTGLRSSQSSSQNR) has biased composition (polar residues).

Its subcellular location is the nucleus. This is an uncharacterized protein from Schizosaccharomyces pombe (strain 972 / ATCC 24843) (Fission yeast).